The following is a 584-amino-acid chain: Protein FAM117B (584 aa).

The interval 1 to 214 (MSQRVRRNGS…SSSSSIIRRT (214 aa)) is disordered. Serine 10 carries the phosphoserine modification. The segment covering 53–79 (TRGGGGGGNNGGNGGASGPSGGGGSGG) has biased composition (gly residues). Positions 80 to 90 (PRTASRSTSPT) are enriched in low complexity. Position 102 is a phosphoserine (serine 102). Low complexity predominate over residues 114–132 (TSTRGTSPTRGTAPGARSS). The span at 133–142 (PPRPQPPPPL) shows a compositional bias: pro residues. Polar residues predominate over residues 145–154 (TVSSPSSSPT). The span at 204 to 214 (SSSSSSIIRRT) shows a compositional bias: low complexity. Phosphoserine occurs at positions 206, 215, 216, and 268. Disordered stretches follow at residues 227–461 (GHWP…SYMF) and 551–584 (STNTEQERVSRGTSTVLPSASLHAPPEPIEEAEG). Residues 287–297 (RSKHSSRHHRD) show a composition bias toward basic residues. Serine 340 bears the Phosphoserine mark. The span at 350 to 361 (IIIKETGEKEEQ) shows a compositional bias: basic and acidic residues. Over residues 379-392 (QRSSSTRSIDTQTP) the composition is skewed to polar residues. Serine 386 is modified (phosphoserine). Low complexity predominate over residues 399–412 (SNNSSRSQSVSPTS). A phosphoserine mark is found at serine 444 and serine 452.

The polypeptide is Protein FAM117B (Fam117b) (Mus musculus (Mouse)).